Here is a 1238-residue protein sequence, read N- to C-terminus: DNA-directed RNA polymerase subunit beta (1238 aa).

Residues 1187–1238 (EGREDTPPEEVYEESYEEGFEEEIEELPEDIDFEPDSFDIENDDLDLEDFDI) form a disordered region. Over residues 1193–1238 (PPEEVYEESYEEGFEEEIEELPEDIDFEPDSFDIENDDLDLEDFDI) the composition is skewed to acidic residues.

This sequence belongs to the RNA polymerase beta chain family. In terms of assembly, the RNAP catalytic core consists of 2 alpha, 1 beta, 1 beta' and 1 omega subunit. When a sigma factor is associated with the core the holoenzyme is formed, which can initiate transcription.

It carries out the reaction RNA(n) + a ribonucleoside 5'-triphosphate = RNA(n+1) + diphosphate. Functionally, DNA-dependent RNA polymerase catalyzes the transcription of DNA into RNA using the four ribonucleoside triphosphates as substrates. This chain is DNA-directed RNA polymerase subunit beta, found in Thermoanaerobacter pseudethanolicus (strain ATCC 33223 / 39E) (Clostridium thermohydrosulfuricum).